A 299-amino-acid polypeptide reads, in one-letter code: Delta-9 desaturase-like 3 protein (299 aa).

A run of 2 helical transmembrane segments spans residues alanine 38–alanine 57 and phenylalanine 58–tyrosine 76. The Histidine box-1 signature appears at histidine 77 to histidine 82. A Histidine box-2 motif is present at residues histidine 114 to histidine 118. 2 helical membrane-spanning segments follow: residues isoleucine 174 to leucine 194 and valine 198 to isoleucine 218. The Histidine box-3 signature appears at histidine 246–histidine 250. A helical membrane pass occupies residues tryptophan 262–threonine 282.

The protein belongs to the fatty acid desaturase type 1 family. It depends on Fe cation as a cofactor.

It localises to the endoplasmic reticulum membrane. Its pathway is lipid metabolism; polyunsaturated fatty acid biosynthesis. The chain is Delta-9 desaturase-like 3 protein from Arabidopsis thaliana (Mouse-ear cress).